The chain runs to 876 residues: Exonuclease mut-7 homolog (876 aa).

The 55-residue stretch at Gly-517–Ala-571 folds into the 3'-5' exonuclease domain. Disordered stretches follow at residues Asp-578–Ala-607 and Ser-751–Glu-781.

The protein belongs to the mut-7 family. Mg(2+) is required as a cofactor.

Possesses 3'-5' exoribonuclease activity. Required for 3'-end trimming of AGO1-bound miRNAs. In Homo sapiens (Human), this protein is Exonuclease mut-7 homolog (EXD3).